A 549-amino-acid polypeptide reads, in one-letter code: Cilia- and flagella-associated protein 45 (549 aa).

The tract at residues 1-27 (MPLSTAGVLSSASTASNRSRNRPRYRT) is disordered. Coiled coils occupy residues 119–232 (KEEL…MMEV) and 259–393 (IVEQ…KRNQ). The disordered stretch occupies residues 391–416 (RNQEVADREWRRKEKENAQKKMETEA).

It belongs to the CFAP45 family. Microtubule inner protein component of sperm flagellar doublet microtubules. Interacts with AK8; dimerization with AK8 may create a cavity at the interface of the dimer that can accommodate AMP. Interacts with CFAP52. Interacts with ENKUR. Directly interacts with DNALI1. Interacts with DNAH11. Interacts with DNAI1. As to expression, expressed in trachea multiciliated cells.

Its subcellular location is the cytoplasm. The protein localises to the cytoskeleton. It is found in the cilium axoneme. The protein resides in the flagellum axoneme. It localises to the cell projection. Its subcellular location is the cilium. The protein localises to the flagellum. Functionally, microtubule inner protein (MIP) part of the dynein-decorated doublet microtubules (DMTs) in cilia axoneme, which is required for motile cilia beating. It is an AMP-binding protein that may facilitate dynein ATPase-dependent ciliary and flagellar beating via adenine nucleotide homeostasis. May function as a donor of AMP to AK8 and hence promote ADP production. This chain is Cilia- and flagella-associated protein 45, found in Bos taurus (Bovine).